The sequence spans 782 residues: Zinc finger and SCAN domain-containing protein 10 (782 aa).

Residues 1–37 are disordered; sequence MLAEPVPDALEQEHPGAVKLEEDEVGEEDPRLAESRP. Residues 1–71 enclose the SCAN box domain; the sequence is MLAEPVPDAL…GRLRELCNHW (71 aa). 2 stretches are compositionally biased toward basic and acidic residues: residues 11–20 and 28–37; these read EQEHPGAVKL and EDPRLAESRP. Phosphoserine occurs at positions 160 and 206. Disordered stretches follow at residues 197–233 and 290–321; these read LAPSSNWPMSPEPQEILQDPRESNPSQGPSWLEENSR and SQTEKPEVAGEPLTQTVGQETSSTGWGGTPAD. 14 C2H2-type zinc fingers span residues 292–315, 321–343, 349–371, 377–399, 421–443, 467–489, 495–517, 523–545, 551–573, 579–601, 607–629, 635–657, 669–691, and 697–719; these read TEKPEVAGEPLTQTVGQETSSTGW, DGSEVVKVRGASDAPEPQGEMQF, GVNFPEMSHLQAHQLQSHPNLQP, SFRCLWCGKTFGRSSILKLHMRT, LTKHLLTHSSEPAFRCAECNQGF, EGKTKVPEMAAVLCSHCGQTFKR, RHLRNHAKDKDHLSSEDPGSLSS, PYVCSDCGKAFRQSEQLMIHTRR, RPFSCQVCGRCFTQNSQLISHQQ, KPHACPQCSKRFVRRAGLARHLL, RPYHCAQCGKSFRQMRDLTRHVR, KPCRCNECGEGFTQNAHLARHQR, ICGHRFRNSSNLARHRRSHTGER, and TCGRSFRRNAHLQRHLITHTGSK. Over residues 302-313 the composition is skewed to polar residues; it reads LTQTVGQETSST. At Gln-485 the chain carries N5-methylglutamine. Residues 491 to 522 are disordered; that stretch reads SSLKRHLRNHAKDKDHLSSEDPGSLSSSQESN. The segment covering 500–509 has biased composition (basic and acidic residues); that stretch reads HAKDKDHLSS. The span at 510 to 521 shows a compositional bias: low complexity; that stretch reads EDPGSLSSSQES.

As to quaternary structure, interacts with POU5F1/OCT4 and SOX2. Post-translationally, methylated at Gln-485 by N6AMT1. As to expression, embryonic stem (ES) cell-specific. Not expressed in adult, except in testis.

It is found in the nucleus. Embryonic stem (ES) cell-specific transcription factor required to maintain ES cell pluripotency. Can both activate and /or repress expression of target genes, depending on the context. Specifically binds the 5'-[GA]CGCNNGCG[CT]-3' DNA consensus sequence. Regulates expression of POU5F1/OCT4, ZSCAN4 and ALYREF/THOC4. The chain is Zinc finger and SCAN domain-containing protein 10 (Zscan10) from Mus musculus (Mouse).